The primary structure comprises 103 residues: uncharacterized protein (103 aa).

This is an uncharacterized protein from Saccharomyces cerevisiae (strain ATCC 204508 / S288c) (Baker's yeast).